Here is a 411-residue protein sequence, read N- to C-terminus: Glutamate dehydrogenase 2 (411 aa).

Lysine 102 is an active-site residue.

The protein belongs to the Glu/Leu/Phe/Val dehydrogenases family.

It localises to the mitochondrion. It catalyses the reaction L-glutamate + NAD(+) + H2O = 2-oxoglutarate + NH4(+) + NADH + H(+). The catalysed reaction is L-glutamate + NADP(+) + H2O = 2-oxoglutarate + NH4(+) + NADPH + H(+). In Arabidopsis thaliana (Mouse-ear cress), this protein is Glutamate dehydrogenase 2 (GDH2).